The chain runs to 464 residues: ATP synthase subunit beta (464 aa).

Position 150 to 157 (150 to 157 (GGAGVGKT)) interacts with ATP.

It belongs to the ATPase alpha/beta chains family. As to quaternary structure, F-type ATPases have 2 components, CF(1) - the catalytic core - and CF(0) - the membrane proton channel. CF(1) has five subunits: alpha(3), beta(3), gamma(1), delta(1), epsilon(1). CF(0) has three main subunits: a(1), b(2) and c(9-12). The alpha and beta chains form an alternating ring which encloses part of the gamma chain. CF(1) is attached to CF(0) by a central stalk formed by the gamma and epsilon chains, while a peripheral stalk is formed by the delta and b chains.

The protein resides in the cell membrane. It catalyses the reaction ATP + H2O + 4 H(+)(in) = ADP + phosphate + 5 H(+)(out). Its function is as follows. Produces ATP from ADP in the presence of a proton gradient across the membrane. The catalytic sites are hosted primarily by the beta subunits. This chain is ATP synthase subunit beta, found in Dehalococcoides mccartyi (strain ATCC BAA-2100 / JCM 16839 / KCTC 5957 / BAV1).